Here is a 28-residue protein sequence, read N- to C-terminus: Omega-conotoxin-like CnVIIH (28 aa).

3 cysteine pairs are disulfide-bonded: cysteine 1–cysteine 16, cysteine 8–cysteine 20, and cysteine 15–cysteine 27. Position 7 is a 4-hydroxyproline; partial (proline 7). Methionine 12 carries the methionine sulfoxide modification. Residue cysteine 27 is modified to Cysteine amide.

Belongs to the conotoxin O1 superfamily. As to expression, expressed by the venom duct.

It localises to the secreted. Functionally, omega-conotoxins act at presynaptic membranes, they bind and block voltage-gated calcium channels (Cav). This toxin blocks N-type calcium channels (Cav2.2/CACNA1B) with high potency. Unexpectedly, it does not show any blocking activity at amphibian neuromuscular junction. In vivo, when intracerebroventricularly injected into mice causes shaking activity, and, at higher doses, causes mild tremors. When injected intramuscularly into fish, it causes paralysis, and, at higher doses, causes death. This chain is Omega-conotoxin-like CnVIIH, found in Conus consors (Singed cone).